Consider the following 203-residue polypeptide: MENNVKKETIVDSEKVEKQQLVTAPVVNKKENTEPKAKTFKRETTTSNFEERVVKIKRISKTTKGGRMMRFSALVVIGDKNGTVGFGMGKSIEVPDAIKKAIKNANNNLIKVKQTKKGSIYHDVNGRHGAAKVMLLPAPEGTGIIAGGPVRAVVELAGFTDIYTKSRGANAPMNVIRATINGLLQQLTPKEIARLRDKSLREI.

One can recognise an S5 DRBM domain in the interval 49–112 (FEERVVKIKR…KNANNNLIKV (64 aa)).

It belongs to the universal ribosomal protein uS5 family. As to quaternary structure, part of the 30S ribosomal subunit. Contacts proteins S4 and S8.

In terms of biological role, with S4 and S12 plays an important role in translational accuracy. Its function is as follows. Located at the back of the 30S subunit body where it stabilizes the conformation of the head with respect to the body. In Ureaplasma parvum serovar 3 (strain ATCC 700970), this protein is Small ribosomal subunit protein uS5.